The following is a 227-amino-acid chain: PKHD-type hydroxylase BTH_II1201 (227 aa).

The 101-residue stretch at 78 to 178 (KVFPPLFNRY…RVASFFWIQS (101 aa)) folds into the Fe2OG dioxygenase domain. Residues His96, Asp98, and His159 each coordinate Fe cation. Position 169 (Arg169) interacts with 2-oxoglutarate.

Fe(2+) is required as a cofactor. Requires L-ascorbate as cofactor.

This is PKHD-type hydroxylase BTH_II1201 from Burkholderia thailandensis (strain ATCC 700388 / DSM 13276 / CCUG 48851 / CIP 106301 / E264).